The chain runs to 250 residues: Prolactin-7A2 (250 aa).

An N-terminal signal peptide occupies residues 1–29 (MQLSFSRPRPWTLLLMVVSNLLLWENVSS). Asn-26, Asn-35, Asn-102, and Asn-134 each carry an N-linked (GlcNAc...) asparagine glycan. 2 cysteine pairs are disulfide-bonded: Cys-100-Cys-215 and Cys-232-Cys-241.

This sequence belongs to the somatotropin/prolactin family. As to expression, expression restricted to placental tissues. Trophoblast giant cells are found to be the major source.

Its subcellular location is the secreted. The sequence is that of Prolactin-7A2 (Prl7a2) from Rattus norvegicus (Rat).